The following is a 417-amino-acid chain: Transcobalamin-1 (417 aa).

The signal sequence occupies residues 1-25; the sequence is MRQSHQLPLVGLLLFSLIPSQLCQS. The globular N-terminal alpha domain stretch occupies residues 24–308; sequence QSCVVSEKDY…DVTKLLLVPK (285 aa). N-linked (GlcNAc...) asparagine glycosylation is present at asparagine 90. Residue 143–147 coordinates cyanocob(III)alamin; that stretch reads TNYYQ. Cysteine 156 and cysteine 198 are disulfide-bonded. Asparagine 161, asparagine 166, and asparagine 179 each carry an N-linked (GlcNAc...) asparagine glycan. 2 residues coordinate cyanocob(III)alamin: aspartate 187 and glutamine 287. Residues 309–327 form a flexible linker region; sequence VQVNITDEPVPVVPTLSPE. N-linked (GlcNAc...) asparagine glycans are attached at residues asparagine 312, asparagine 328, asparagine 345, and asparagine 360. The tract at residues 328-417 is globular C-terminal beta domain; sequence NISVIYCVKI…GIMLSKMESI (90 aa). Residues 376-377 and 393-395 contribute to the cyanocob(III)alamin site; these read YI and WEH.

This sequence belongs to the eukaryotic cobalamin transport proteins family. Post-translationally, contains about 30% carbohydrates. In terms of tissue distribution, haptocorrins are a family of cobalamin-binding glycoproteins found in blood, salivary and mucosal secretions.

The protein resides in the secreted. In terms of biological role, binds vitamin B12 with femtomolar affinity and protects it from the acidic environment of the stomach. Binds to cobalamin and to cobalamin analogs such as cobinamide. The polypeptide is Transcobalamin-1 (TCN1) (Sus scrofa (Pig)).